Reading from the N-terminus, the 185-residue chain is Large ribosomal subunit protein uL30 (185 aa).

Belongs to the universal ribosomal protein uL30 family. Part of the 50S ribosomal subunit.

The polypeptide is Large ribosomal subunit protein uL30 (Caldivirga maquilingensis (strain ATCC 700844 / DSM 13496 / JCM 10307 / IC-167)).